The primary structure comprises 688 residues: Polyribonucleotide nucleotidyltransferase (688 aa).

Mg(2+)-binding residues include D484 and D490. In terms of domain architecture, KH spans 550 to 609; sequence PTTEIFNVAPDKIVEIIGQGGRVIKEIVEKFEVKIDLNKPSGEVKIMGNKERVLKTKEFI. One can recognise an S1 motif domain in the interval 626–688; that stretch reads DEVLEAQVKR…NKGKIALDLA (63 aa).

The protein belongs to the polyribonucleotide nucleotidyltransferase family. The cofactor is Mg(2+).

The protein resides in the cytoplasm. It catalyses the reaction RNA(n+1) + phosphate = RNA(n) + a ribonucleoside 5'-diphosphate. Its function is as follows. Involved in mRNA degradation. Catalyzes the phosphorolysis of single-stranded polyribonucleotides processively in the 3'- to 5'-direction. This chain is Polyribonucleotide nucleotidyltransferase, found in Helicobacter pylori (strain ATCC 700392 / 26695) (Campylobacter pylori).